The sequence spans 162 residues: NAD(P)H-quinone oxidoreductase subunit N (162 aa).

This sequence belongs to the complex I NdhN subunit family. NDH-1 can be composed of about 15 different subunits; different subcomplexes with different compositions have been identified which probably have different functions.

The protein localises to the cellular thylakoid membrane. The catalysed reaction is a plastoquinone + NADH + (n+1) H(+)(in) = a plastoquinol + NAD(+) + n H(+)(out). It catalyses the reaction a plastoquinone + NADPH + (n+1) H(+)(in) = a plastoquinol + NADP(+) + n H(+)(out). Functionally, NDH-1 shuttles electrons from an unknown electron donor, via FMN and iron-sulfur (Fe-S) centers, to quinones in the respiratory and/or the photosynthetic chain. The immediate electron acceptor for the enzyme in this species is believed to be plastoquinone. Couples the redox reaction to proton translocation, and thus conserves the redox energy in a proton gradient. Cyanobacterial NDH-1 also plays a role in inorganic carbon-concentration. In Nostoc sp. (strain PCC 7120 / SAG 25.82 / UTEX 2576), this protein is NAD(P)H-quinone oxidoreductase subunit N.